A 490-amino-acid chain; its full sequence is UDP-N-acetylmuramate--L-alanine ligase (490 aa).

Residue 122–128 (GTHGKTS) coordinates ATP.

It belongs to the MurCDEF family.

It is found in the cytoplasm. The catalysed reaction is UDP-N-acetyl-alpha-D-muramate + L-alanine + ATP = UDP-N-acetyl-alpha-D-muramoyl-L-alanine + ADP + phosphate + H(+). Its pathway is cell wall biogenesis; peptidoglycan biosynthesis. Functionally, cell wall formation. The polypeptide is UDP-N-acetylmuramate--L-alanine ligase (Mycobacteroides abscessus (strain ATCC 19977 / DSM 44196 / CCUG 20993 / CIP 104536 / JCM 13569 / NCTC 13031 / TMC 1543 / L948) (Mycobacterium abscessus)).